The sequence spans 400 residues: S-adenosylmethionine synthase (400 aa).

137–142 (GEGSGD) contacts ATP.

This sequence belongs to the AdoMet synthase 2 family. Mg(2+) is required as a cofactor.

It catalyses the reaction L-methionine + ATP + H2O = S-adenosyl-L-methionine + phosphate + diphosphate. Its pathway is amino-acid biosynthesis; S-adenosyl-L-methionine biosynthesis; S-adenosyl-L-methionine from L-methionine: step 1/1. Catalyzes the formation of S-adenosylmethionine from methionine and ATP. The chain is S-adenosylmethionine synthase from Haloarcula marismortui (strain ATCC 43049 / DSM 3752 / JCM 8966 / VKM B-1809) (Halobacterium marismortui).